We begin with the raw amino-acid sequence, 256 residues long: Imidazole glycerol phosphate synthase subunit HisF (256 aa).

Catalysis depends on residues Asp-11 and Asp-130.

Belongs to the HisA/HisF family. In terms of assembly, heterodimer of HisH and HisF.

It is found in the cytoplasm. The catalysed reaction is 5-[(5-phospho-1-deoxy-D-ribulos-1-ylimino)methylamino]-1-(5-phospho-beta-D-ribosyl)imidazole-4-carboxamide + L-glutamine = D-erythro-1-(imidazol-4-yl)glycerol 3-phosphate + 5-amino-1-(5-phospho-beta-D-ribosyl)imidazole-4-carboxamide + L-glutamate + H(+). It functions in the pathway amino-acid biosynthesis; L-histidine biosynthesis; L-histidine from 5-phospho-alpha-D-ribose 1-diphosphate: step 5/9. IGPS catalyzes the conversion of PRFAR and glutamine to IGP, AICAR and glutamate. The HisF subunit catalyzes the cyclization activity that produces IGP and AICAR from PRFAR using the ammonia provided by the HisH subunit. This Prochlorococcus marinus (strain MIT 9215) protein is Imidazole glycerol phosphate synthase subunit HisF.